Reading from the N-terminus, the 575-residue chain is 3-hydroxy-3-methylglutaryl-coenzyme A reductase 1 (575 aa).

Basic residues predominate over residues 1 to 13 (MDTTGRLHHRKHA). Residues 1 to 25 (MDTTGRLHHRKHATPVEDRSPTTPK) form a disordered region. A run of 2 helical transmembrane segments spans residues 29-49 (ALPLPLYLTNAVFFTLFFSVA) and 73-93 (EIVAIVSLIASFIYLLGFFGI). Positions 97 to 160 (QSFIARASHD…PLIAPLVSEE (64 aa)) are linker. Asn-132 carries an N-linked (GlcNAc...) asparagine glycan. Residues 161–575 (DEMIVNSVVD…SSKDMSKAAS (415 aa)) form a catalytic region. Glu-254 acts as the Charge relay system in catalysis. N-linked (GlcNAc...) asparagine glycosylation occurs at Asn-318. Catalysis depends on charge relay system residues Lys-386 and Asp-462. The helical transmembrane segment at 531 to 551 (LLAAIVAGSVLAGELSLMSAI) threads the bilayer. His-560 functions as the Proton donor in the catalytic mechanism. The N-linked (GlcNAc...) asparagine glycan is linked to Asn-564.

Belongs to the HMG-CoA reductase family.

The protein resides in the endoplasmic reticulum membrane. It is found in the mitochondrion membrane. The protein localises to the plastid membrane. The enzyme catalyses (R)-mevalonate + 2 NADP(+) + CoA = (3S)-3-hydroxy-3-methylglutaryl-CoA + 2 NADPH + 2 H(+). It participates in metabolic intermediate biosynthesis; (R)-mevalonate biosynthesis; (R)-mevalonate from acetyl-CoA: step 3/3. In terms of biological role, catalyzes the synthesis of mevalonate. The specific precursor of all isoprenoid compounds present in plants. The chain is 3-hydroxy-3-methylglutaryl-coenzyme A reductase 1 (HMGR1) from Hevea brasiliensis (Para rubber tree).